A 452-amino-acid polypeptide reads, in one-letter code: Pup--protein ligase (452 aa).

Residue glutamate 9 coordinates Mg(2+). Residue arginine 53 participates in ATP binding. Tyrosine 55 is a binding site for Mg(2+). Residue aspartate 57 is the Proton acceptor of the active site. Glutamate 63 provides a ligand contact to Mg(2+). Positions 66 and 419 each coordinate ATP.

It belongs to the Pup ligase/Pup deamidase family. Pup-conjugating enzyme subfamily.

It catalyses the reaction ATP + [prokaryotic ubiquitin-like protein]-L-glutamate + [protein]-L-lysine = ADP + phosphate + N(6)-([prokaryotic ubiquitin-like protein]-gamma-L-glutamyl)-[protein]-L-lysine.. The protein operates within protein degradation; proteasomal Pup-dependent pathway. It functions in the pathway protein modification; protein pupylation. Its function is as follows. Catalyzes the covalent attachment of the prokaryotic ubiquitin-like protein modifier Pup to the proteasomal substrate proteins, thereby targeting them for proteasomal degradation. This tagging system is termed pupylation. The ligation reaction involves the side-chain carboxylate of the C-terminal glutamate of Pup and the side-chain amino group of a substrate lysine. In Mycobacterium tuberculosis (strain KZN 1435 / MDR), this protein is Pup--protein ligase.